A 378-amino-acid chain; its full sequence is Acyl-coenzyme A diphosphatase NUDT19 (378 aa).

One can recognise a Nudix hydrolase domain in the interval 7–258 (HWREAASVLL…EIWLAPPQFY (252 aa)). Residues 105 to 126 (SPLPGEVAFRICAIRETFEEAG) carry the Nudix box motif. Glutamate 120 and glutamate 124 together coordinate Mg(2+). The Microbody targeting signal motif lies at 376–378 (SRL).

Belongs to the Nudix hydrolase family. As to quaternary structure, monomer. The cofactor is Mg(2+). Mn(2+) serves as cofactor.

The protein localises to the peroxisome. The catalysed reaction is an acyl-CoA + H2O = an acyl-4'-phosphopantetheine + adenosine 3',5'-bisphosphate + 2 H(+). The enzyme catalyses CoA + H2O = (R)-4'-phosphopantetheine + adenosine 3',5'-bisphosphate + 2 H(+). It catalyses the reaction hexanoyl-CoA + H2O = hexanoyl-4'-phosphopantetheine + adenosine 3',5'-bisphosphate + 2 H(+). It carries out the reaction octanoyl-CoA + H2O = S-octanoyl-4'-phosphopantetheine + adenosine 3',5'-bisphosphate + 2 H(+). The catalysed reaction is butanoyl-CoA + H2O = S-butanoyl-4'-phosphopantetheine + adenosine 3',5'-bisphosphate + 2 H(+). The enzyme catalyses propanoyl-CoA + H2O = propanoyl-4'-phosphopantetheine + adenosine 3',5'-bisphosphate + 2 H(+). It catalyses the reaction malonyl-CoA + H2O = malonyl-4'-phosphopantetheine + adenosine 3',5'-bisphosphate + 2 H(+). It carries out the reaction succinyl-CoA + H2O = succinyl-4'-phosphopantetheine + adenosine 3',5'-bisphosphate + 2 H(+). The catalysed reaction is choloyl-CoA + H2O = S-choloyl-4'-phosphopantetheine + adenosine 3',5'-bisphosphate + 2 H(+). The enzyme catalyses 4,8-dimethylnonanoyl-CoA + H2O = S-(4,8-dimethylnonanoyl)-4'-phosphopantetheine + adenosine 3',5'-bisphosphate + 2 H(+). It catalyses the reaction (9Z,12Z,15Z)-octadecatrienoyl-CoA + H2O = S-(9Z,12Z,15Z-octadecatrienoyl)-4'-phosphopantetheine + adenosine 3',5'-bisphosphate + 2 H(+). It carries out the reaction (9Z,12Z)-octadecadienoyl-CoA + H2O = S-(9Z,12Z-octadecadienoyl)-4'-phosphopantetheine + adenosine 3',5'-bisphosphate + 2 H(+). The catalysed reaction is (9Z)-hexadecenoyl-CoA + H2O = S-(9Z-hexadecenoyl)-4'-phosphopantetheine + adenosine 3',5'-bisphosphate + 2 H(+). The enzyme catalyses (9Z)-tetradecenoyl-CoA + H2O = S-(9Z-tetradecenoyl)-4'-phosphopantetheine + adenosine 3',5'-bisphosphate + 2 H(+). It catalyses the reaction (6Z)-octenoyl-CoA + H2O = S-(6Z-octenoyl)-4'-phosphopantetheine + adenosine 3',5'-bisphosphate + 2 H(+). It carries out the reaction hexadecanoyl-CoA + H2O = S-hexadecanoyl-4'-phosphopantetheine + adenosine 3',5'-bisphosphate + 2 H(+). The catalysed reaction is tetradecanoyl-CoA + H2O = tetradecanoyl-4'-phosphopantetheine + adenosine 3',5'-bisphosphate + 2 H(+). The enzyme catalyses dodecanoyl-CoA + H2O = S-dodecanoyl-4'-phosphopantetheine + adenosine 3',5'-bisphosphate + 2 H(+). It catalyses the reaction a 5'-end CoA-ribonucleoside in mRNA + H2O = a 5'-end phospho-adenosine-phospho-ribonucleoside in mRNA + (R)-4'-phosphopantetheine + 2 H(+). Functionally, fatty acyl-coenzyme A (CoA) diphosphatase that hydrolyzes fatty acyl-CoA to yield acyl-4'-phosphopantetheine and adenosine 3',5'-bisphosphate. Mediates the hydrolysis of a wide range of CoA esters, including choloyl-CoA and branched-chain fatty-acyl-CoA esters and at low substrate concentrations medium and long-chain fatty-acyl-CoA esters are the primary substrates. Highest activity seen with medium-chain acyl-CoA esters and higher rates of activity seen with the unsaturated acyl-CoA esters compared with the saturated esters. Exhibits decapping activity towards dpCoA-capped RNAs in vitro. The chain is Acyl-coenzyme A diphosphatase NUDT19 (NUDT19) from Gallus gallus (Chicken).